We begin with the raw amino-acid sequence, 274 residues long: Hydroxyethylthiazole kinase (274 aa).

Met49 contributes to the substrate binding site. Positions 125 and 173 each coordinate ATP. Gly200 provides a ligand contact to substrate.

The protein belongs to the Thz kinase family. It depends on Mg(2+) as a cofactor.

The enzyme catalyses 5-(2-hydroxyethyl)-4-methylthiazole + ATP = 4-methyl-5-(2-phosphooxyethyl)-thiazole + ADP + H(+). Its pathway is cofactor biosynthesis; thiamine diphosphate biosynthesis; 4-methyl-5-(2-phosphoethyl)-thiazole from 5-(2-hydroxyethyl)-4-methylthiazole: step 1/1. Catalyzes the phosphorylation of the hydroxyl group of 4-methyl-5-beta-hydroxyethylthiazole (THZ). This chain is Hydroxyethylthiazole kinase, found in Desulfosudis oleivorans (strain DSM 6200 / JCM 39069 / Hxd3) (Desulfococcus oleovorans).